We begin with the raw amino-acid sequence, 168 residues long: Phosphopantetheine adenylyltransferase (168 aa).

Substrate is bound at residue T17. ATP contacts are provided by residues 17–18 (TF) and H25. The substrate site is built by K49, L81, and R95. Residues 96–98 (GLR), E106, and 131–137 (LMYISST) contribute to the ATP site.

It belongs to the bacterial CoaD family. As to quaternary structure, homohexamer. It depends on Mg(2+) as a cofactor.

It is found in the cytoplasm. The enzyme catalyses (R)-4'-phosphopantetheine + ATP + H(+) = 3'-dephospho-CoA + diphosphate. The protein operates within cofactor biosynthesis; coenzyme A biosynthesis; CoA from (R)-pantothenate: step 4/5. Functionally, reversibly transfers an adenylyl group from ATP to 4'-phosphopantetheine, yielding dephospho-CoA (dPCoA) and pyrophosphate. The protein is Phosphopantetheine adenylyltransferase of Legionella pneumophila (strain Paris).